We begin with the raw amino-acid sequence, 490 residues long: Scarecrow-like transcription factor PAT1 (490 aa).

One can recognise a GRAS domain in the interval 110-490; that stretch reads TLEAISRRDL…RDLVASCAWK (381 aa). Residues 117 to 178 form a leucine repeat I (LRI) region; it reads RDLRADLVSC…AQLASSGSSI (62 aa). The VHIID stretch occupies residues 197-262; that stretch reads MHILYEVCPY…GGPPRIRITG (66 aa). The VHIID signature appears at 228 to 232; it reads VHIID. The segment at 278–310 is leucine repeat II (LRII); it reads IVGNRLAKLAKQFNVPFEFNSVSVSVSEVKPKN. The segment at 319 to 413 is PFYRE; sequence LAVNFAFVLH…QHCLARDVVN (95 aa). Residues 416–490 form an SAW region; sequence ACEGADRVER…RDLVASCAWK (75 aa).

It belongs to the GRAS family.

It localises to the cytoplasm. In terms of biological role, probable transcription factor involved in phytochrome A (phyA) signal transduction. This Arabidopsis thaliana (Mouse-ear cress) protein is Scarecrow-like transcription factor PAT1 (PAT1).